Here is a 361-residue protein sequence, read N- to C-terminus: Uroporphyrinogen decarboxylase (361 aa).

Substrate contacts are provided by residues 27–31, Asp77, Tyr154, Thr209, and His327; that span reads RQAGR.

Belongs to the uroporphyrinogen decarboxylase family. In terms of assembly, homodimer.

It is found in the cytoplasm. It carries out the reaction uroporphyrinogen III + 4 H(+) = coproporphyrinogen III + 4 CO2. The protein operates within porphyrin-containing compound metabolism; protoporphyrin-IX biosynthesis; coproporphyrinogen-III from 5-aminolevulinate: step 4/4. Catalyzes the decarboxylation of four acetate groups of uroporphyrinogen-III to yield coproporphyrinogen-III. The sequence is that of Uroporphyrinogen decarboxylase from Coxiella burnetii (strain Dugway 5J108-111).